Consider the following 502-residue polypeptide: Glycerol kinase (502 aa).

Thr14 provides a ligand contact to ADP. Residues Thr14, Thr15, and Ser16 each coordinate ATP. Position 14 (Thr14) interacts with sn-glycerol 3-phosphate. Arg18 provides a ligand contact to ADP. 3 residues coordinate sn-glycerol 3-phosphate: Arg84, Glu85, and Tyr136. Glycerol contacts are provided by Arg84, Glu85, and Tyr136. His232 carries the post-translational modification Phosphohistidine; by HPr. Asp246 provides a ligand contact to sn-glycerol 3-phosphate. Glycerol-binding residues include Asp246 and Gln247. ADP is bound by residues Thr268 and Gly311. Positions 268, 311, 315, and 412 each coordinate ATP. ADP contacts are provided by Gly412 and Asn416.

It belongs to the FGGY kinase family. As to quaternary structure, homotetramer and homodimer (in equilibrium). Post-translationally, the phosphoenolpyruvate-dependent sugar phosphotransferase system (PTS), including enzyme I, and histidine-containing protein (HPr) are required for the phosphorylation, which leads to the activation of the enzyme.

It catalyses the reaction glycerol + ATP = sn-glycerol 3-phosphate + ADP + H(+). The protein operates within polyol metabolism; glycerol degradation via glycerol kinase pathway; sn-glycerol 3-phosphate from glycerol: step 1/1. With respect to regulation, activated by phosphorylation and inhibited by fructose 1,6-bisphosphate (FBP). In terms of biological role, key enzyme in the regulation of glycerol uptake and metabolism. Catalyzes the phosphorylation of glycerol to yield sn-glycerol 3-phosphate. This Streptococcus pneumoniae serotype 2 (strain D39 / NCTC 7466) protein is Glycerol kinase.